The chain runs to 64 residues: Conotoxin Leo-T1 (64 aa).

Residues M1–A22 form the signal peptide. A propeptide spanning residues Q23–D48 is cleaved from the precursor.

It belongs to the conotoxin T superfamily. Post-translationally, contains 2 disulfide bonds that can be either 'C1-C3, C2-C4' or 'C1-C4, C2-C3', since these disulfide connectivities have been observed for conotoxins with cysteine framework V (for examples, see AC P0DQQ7 and AC P81755). Expressed by the venom duct.

The protein resides in the secreted. This chain is Conotoxin Leo-T1, found in Conus leopardus (Leopard cone).